A 376-amino-acid polypeptide reads, in one-letter code: Probable ribonucleoside-diphosphate reductase small subunit 048L (376 aa).

Fe cation contacts are provided by aspartate 110, glutamate 140, and histidine 143. Residue tyrosine 147 is part of the active site. Residues glutamate 217, glutamate 251, and histidine 254 each contribute to the Fe cation site.

It belongs to the ribonucleoside diphosphate reductase small chain family. Heterotetramer composed of a homodimer of the large subunit (R1) and a homodimer of the small subunit (R2). Larger multisubunit protein complex are also active, composed of (R1)n(R2)n. Requires Fe cation as cofactor.

The catalysed reaction is a 2'-deoxyribonucleoside 5'-diphosphate + [thioredoxin]-disulfide + H2O = a ribonucleoside 5'-diphosphate + [thioredoxin]-dithiol. Its function is as follows. Ribonucleoside-diphosphate reductase holoenzyme provides the precursors necessary for viral DNA synthesis. Allows virus growth in non-dividing cells. Catalyzes the biosynthesis of deoxyribonucleotides from the corresponding ribonucleotides. The sequence is that of Probable ribonucleoside-diphosphate reductase small subunit 048L from Invertebrate iridescent virus 3 (IIV-3).